Consider the following 336-residue polypeptide: 3-isopropylmalate dehydrogenase (336 aa).

Substrate-binding residues include R87, R97, R121, and D211. Residues D211, D235, and D239 each contribute to the Mg(2+) site. 271–283 (GSAPDIAGQGIAD) is an NAD(+) binding site.

Belongs to the isocitrate and isopropylmalate dehydrogenases family. LeuB type 2 subfamily. Homodimer. It depends on Mg(2+) as a cofactor. Requires Mn(2+) as cofactor.

It localises to the cytoplasm. It carries out the reaction (2R,3S)-3-isopropylmalate + NAD(+) = 4-methyl-2-oxopentanoate + CO2 + NADH. It functions in the pathway amino-acid biosynthesis; L-leucine biosynthesis; L-leucine from 3-methyl-2-oxobutanoate: step 3/4. Functionally, catalyzes the oxidation of 3-carboxy-2-hydroxy-4-methylpentanoate (3-isopropylmalate) to 3-carboxy-4-methyl-2-oxopentanoate. The product decarboxylates to 4-methyl-2 oxopentanoate. This is 3-isopropylmalate dehydrogenase from Mycolicibacterium gilvum (strain PYR-GCK) (Mycobacterium gilvum (strain PYR-GCK)).